Here is a 578-residue protein sequence, read N- to C-terminus: A-type ATP synthase subunit A (578 aa).

Residue 228–235 participates in ATP binding; it reads GPFGSGKT.

Belongs to the ATPase alpha/beta chains family. In terms of assembly, has multiple subunits with at least A(3), B(3), C, D, E, F, H, I and proteolipid K(x).

The protein resides in the cell membrane. The enzyme catalyses ATP + H2O + 4 H(+)(in) = ADP + phosphate + 5 H(+)(out). In terms of biological role, component of the A-type ATP synthase that produces ATP from ADP in the presence of a proton gradient across the membrane. The A chain is the catalytic subunit. This Methanosarcina acetivorans (strain ATCC 35395 / DSM 2834 / JCM 12185 / C2A) protein is A-type ATP synthase subunit A.